The following is a 501-amino-acid chain: Ribose import ATP-binding protein RbsA (501 aa).

ABC transporter domains are found at residues 8-245 (LKMV…VGRT) and 255-500 (VKKG…VGIN). 40 to 47 (GENGAGKS) provides a ligand contact to ATP.

This sequence belongs to the ABC transporter superfamily. Ribose importer (TC 3.A.1.2.1) family. As to quaternary structure, the complex is composed of an ATP-binding protein (RbsA), two transmembrane proteins (RbsC) and a solute-binding protein (RbsB).

Its subcellular location is the cell membrane. The catalysed reaction is D-ribose(out) + ATP + H2O = D-ribose(in) + ADP + phosphate + H(+). Functionally, part of the ABC transporter complex RbsABC involved in ribose import. Responsible for energy coupling to the transport system. The sequence is that of Ribose import ATP-binding protein RbsA from Clostridium perfringens (strain 13 / Type A).